We begin with the raw amino-acid sequence, 178 residues long: MTSWLCASNMKFRINKFKIEKFQIDNSDIVGKIMGLDINTCDLLTKAVVVDHECEYYWDSKVCICGKDPLTKLKQLEKVECLDFSKIAQEITGGIISSESLRDMYDYISRMLYDSETFEFPLEWDFTFANRYILVPRSYENNSQIEMIKGFCFFADELPFIKPLIVKFFTEKNPTIVY.

Belongs to the mimivirus L39/R874 family.

This is an uncharacterized protein from Acanthamoeba polyphaga (Amoeba).